The sequence spans 291 residues: MFSGVYTALITPFKDYKVDFDAFEKLIENQYKKGVNGIVPCGTTGESPTLSCKEHEEVIEFCVEKAKGKMKVLAGTGSNSTDEAIYFTRTAKRVGCDGVLVVSPYYNKPTQKGLYLHFKTIADTIDIPIVLYNIAGRTSINIEPATVAKLFKNCKNIIGVKEASGSLDQMSAIKSLVPDIELISGDDALTLPLLSIGGIGVISVLSNIIPTEIVSLVKTFEKGDLKEAVKIHYKLLPLVKLMFIETNPIPVKTVASLLGMCSADLRLPMCEMEEPNRLKLEKALKDFGLLK.

Residue T44 coordinates pyruvate. The Proton donor/acceptor role is filled by Y132. K161 (schiff-base intermediate with substrate) is an active-site residue. I202 serves as a coordination point for pyruvate.

This sequence belongs to the DapA family. As to quaternary structure, homotetramer; dimer of dimers.

It localises to the cytoplasm. It carries out the reaction L-aspartate 4-semialdehyde + pyruvate = (2S,4S)-4-hydroxy-2,3,4,5-tetrahydrodipicolinate + H2O + H(+). It participates in amino-acid biosynthesis; L-lysine biosynthesis via DAP pathway; (S)-tetrahydrodipicolinate from L-aspartate: step 3/4. Catalyzes the condensation of (S)-aspartate-beta-semialdehyde [(S)-ASA] and pyruvate to 4-hydroxy-tetrahydrodipicolinate (HTPA). This chain is 4-hydroxy-tetrahydrodipicolinate synthase, found in Endomicrobium trichonymphae.